Here is a 418-residue protein sequence, read N- to C-terminus: UDP-N-acetylglucosamine 1-carboxyvinyltransferase (418 aa).

22–23 (KN) contributes to the phosphoenolpyruvate binding site. Arg-93 serves as a coordination point for UDP-N-acetyl-alpha-D-glucosamine. Cys-117 functions as the Proton donor in the catalytic mechanism. At Cys-117 the chain carries 2-(S-cysteinyl)pyruvic acid O-phosphothioketal. Residues Asp-305 and Val-327 each contribute to the UDP-N-acetyl-alpha-D-glucosamine site.

It belongs to the EPSP synthase family. MurA subfamily.

The protein resides in the cytoplasm. The enzyme catalyses phosphoenolpyruvate + UDP-N-acetyl-alpha-D-glucosamine = UDP-N-acetyl-3-O-(1-carboxyvinyl)-alpha-D-glucosamine + phosphate. It participates in cell wall biogenesis; peptidoglycan biosynthesis. Its function is as follows. Cell wall formation. Adds enolpyruvyl to UDP-N-acetylglucosamine. The protein is UDP-N-acetylglucosamine 1-carboxyvinyltransferase of Alkalilimnicola ehrlichii (strain ATCC BAA-1101 / DSM 17681 / MLHE-1).